Consider the following 1097-residue polypeptide: Transmembrane protein 132D (1097 aa).

An N-terminal signal peptide occupies residues 1 to 30 (MCPSEMGTLWYLWSPVLISLAALFSKVTEG). Over 31–913 (RGILESIQRF…LDQAAKGLSD (883 aa)) the chain is Extracellular. Residues 233 to 245 (DERGDCAKEDSRK) are compositionally biased toward basic and acidic residues. The interval 233 to 263 (DERGDCAKEDSRKSGGTPAGHNDVDESSPPL) is disordered. The helical transmembrane segment at 914-934 (LEIGMYALLGVFCLAILVFLI) threads the bilayer. Topologically, residues 935–1097 (NCVTFALKYR…SCMERLHEHV (163 aa)) are cytoplasmic. A disordered region spans residues 1021 to 1042 (MLTDDQEQKSEPPTSPTSKRKR).

This sequence belongs to the TMEM132 family. As to expression, expressed in mature oligodendrocytes in the white and gray matter of the brain.

Its subcellular location is the membrane. Regulates neuronal morphology via inhibition of the WAVE regulatory complex (WCR), a complex that controls F-actin cytoskeletal dynamics. This chain is Transmembrane protein 132D (Tmem132d), found in Mus musculus (Mouse).